Reading from the N-terminus, the 172-residue chain is Ubiquitin-conjugating enzyme E2 PEX4 (172 aa).

The UBC core domain maps to 14-167; sequence SASKRLIKEL…VELWCQDSDS (154 aa). Catalysis depends on Cys-104, which acts as the Glycyl thioester intermediate.

It belongs to the ubiquitin-conjugating enzyme family.

It catalyses the reaction S-ubiquitinyl-[E1 ubiquitin-activating enzyme]-L-cysteine + [E2 ubiquitin-conjugating enzyme]-L-cysteine = [E1 ubiquitin-activating enzyme]-L-cysteine + S-ubiquitinyl-[E2 ubiquitin-conjugating enzyme]-L-cysteine.. Its pathway is protein modification; protein ubiquitination. Its function is as follows. Ubiquitin-conjugating enzyme E2 that is essential for peroxisome biogenesis and plays a key role in development, pathogenicity, and cell wall integrity. Required for long and very long-chain fatty acid utilization and is involved in lipid droplet accumulation and the elimination of reactive oxygen species. Controls the expression of proteins involved in protein biosynthesis, fatty acid metabolism, cell wall synthesis, oxidation-reduction reactions, as well as of the enzymes involved in the biosynthesis of the mycotoxin deoxynivalenol (DON), including TRI5, TRI6, and TRI10. The polypeptide is Ubiquitin-conjugating enzyme E2 PEX4 (Gibberella zeae (strain ATCC MYA-4620 / CBS 123657 / FGSC 9075 / NRRL 31084 / PH-1) (Wheat head blight fungus)).